The following is a 649-amino-acid chain: 1-deoxy-D-xylulose-5-phosphate synthase (649 aa).

Thiamine diphosphate is bound by residues His73 and 114-116 (SHA). Residue Asp145 coordinates Mg(2+). Thiamine diphosphate-binding positions include 146-147 (GA), Asn175, Tyr286, and Glu367. Residue Asn175 coordinates Mg(2+).

This sequence belongs to the transketolase family. DXPS subfamily. In terms of assembly, homodimer. Mg(2+) is required as a cofactor. Thiamine diphosphate serves as cofactor.

The catalysed reaction is D-glyceraldehyde 3-phosphate + pyruvate + H(+) = 1-deoxy-D-xylulose 5-phosphate + CO2. Its pathway is metabolic intermediate biosynthesis; 1-deoxy-D-xylulose 5-phosphate biosynthesis; 1-deoxy-D-xylulose 5-phosphate from D-glyceraldehyde 3-phosphate and pyruvate: step 1/1. Its function is as follows. Catalyzes the acyloin condensation reaction between C atoms 2 and 3 of pyruvate and glyceraldehyde 3-phosphate to yield 1-deoxy-D-xylulose-5-phosphate (DXP). This chain is 1-deoxy-D-xylulose-5-phosphate synthase, found in Rhodococcus jostii (strain RHA1).